Here is a 352-residue protein sequence, read N- to C-terminus: Phosphoribosylformylglycinamidine cyclo-ligase (352 aa).

This sequence belongs to the AIR synthase family.

It is found in the cytoplasm. It carries out the reaction 2-formamido-N(1)-(5-O-phospho-beta-D-ribosyl)acetamidine + ATP = 5-amino-1-(5-phospho-beta-D-ribosyl)imidazole + ADP + phosphate + H(+). The protein operates within purine metabolism; IMP biosynthesis via de novo pathway; 5-amino-1-(5-phospho-D-ribosyl)imidazole from N(2)-formyl-N(1)-(5-phospho-D-ribosyl)glycinamide: step 2/2. The chain is Phosphoribosylformylglycinamidine cyclo-ligase from Saccharophagus degradans (strain 2-40 / ATCC 43961 / DSM 17024).